A 111-amino-acid chain; its full sequence is MNFSECPLVISACKKFLQKRITIENEALINALITALAQTTTLNELCLLPIQTYLLSYKNAFEWIHFVCIAITTILDNKYNWKDCTVDINYIFLHVTYIYTIKTKEYLDYCS.

Belongs to the asfivirus E111R family.

This is an uncharacterized protein from African swine fever virus (isolate Pig/Kenya/KEN-50/1950) (ASFV).